The following is a 59-amino-acid chain: Beta-defensin 134 (59 aa).

Residues 1 to 19 (MKPLLVVFVFLFLWDPVLA) form the signal peptide. 3 cysteine pairs are disulfide-bonded: Cys25–Cys51, Cys31–Cys45, and Cys35–Cys52.

This sequence belongs to the beta-defensin family.

It localises to the secreted. In terms of biological role, has antibacterial activity. The polypeptide is Beta-defensin 134 (DEFB134) (Pan troglodytes (Chimpanzee)).